The following is a 384-amino-acid chain: Tryptophan--tRNA ligase (384 aa).

Residues 81–89 carry the 'HIGH' region motif; it reads PSGPMHIGH. A 'KMSKS' region motif is present at residues 252–256; the sequence is KMSAS.

It belongs to the class-I aminoacyl-tRNA synthetase family.

It is found in the cytoplasm. The enzyme catalyses tRNA(Trp) + L-tryptophan + ATP = L-tryptophyl-tRNA(Trp) + AMP + diphosphate + H(+). The protein is Tryptophan--tRNA ligase of Thermococcus sibiricus (strain DSM 12597 / MM 739).